We begin with the raw amino-acid sequence, 79 residues long: D-alanyl carrier protein (79 aa).

The Carrier domain maps to 1–77; sequence MDTKQAVLDI…KIIAKVESLR (77 aa). S35 is modified (O-(pantetheine 4'-phosphoryl)serine).

Belongs to the DltC family. In terms of processing, 4'-phosphopantetheine is transferred from CoA to a specific serine of apo-DCP.

Its subcellular location is the cytoplasm. Its pathway is cell wall biogenesis; lipoteichoic acid biosynthesis. Its function is as follows. Carrier protein involved in the D-alanylation of lipoteichoic acid (LTA). The loading of thioester-linked D-alanine onto DltC is catalyzed by D-alanine--D-alanyl carrier protein ligase DltA. The DltC-carried D-alanyl group is further transferred to cell membrane phosphatidylglycerol (PG) by forming an ester bond, probably catalyzed by DltD. D-alanylation of LTA plays an important role in modulating the properties of the cell wall in Gram-positive bacteria, influencing the net charge of the cell wall. The chain is D-alanyl carrier protein from Lactobacillus gasseri (strain ATCC 33323 / DSM 20243 / BCRC 14619 / CIP 102991 / JCM 1131 / KCTC 3163 / NCIMB 11718 / NCTC 13722 / AM63).